The primary structure comprises 145 residues: Hydrophobin-like protein 1 (145 aa).

An N-terminal signal peptide occupies residues 1–20; it reads MYLLQISISLLLLISTAATA. A glycan (N-linked (GlcNAc...) asparagine) is linked at Asn36. 4 disulfide bridges follow: Cys61-Cys121, Cys71-Cys113, Cys72-Cys104, and Cys122-Cys139.

The protein localises to the secreted. It localises to the cell wall. In terms of biological role, aerial growth, conidiation, and dispersal of filamentous fungi in the environment rely upon a capability of their secreting small amphipathic proteins called hydrophobins (HPBs) with low sequence identity. Class I can self-assemble into an outermost layer of rodlet bundles on aerial cell surfaces, conferring cellular hydrophobicity that supports fungal growth, development and dispersal; whereas Class II form highly ordered films at water-air interfaces through intermolecular interactions but contribute nothing to the rodlet structure. In Botryotinia fuckeliana, hydrophobins are not involved in conferring surface hydrophobicity to conidia and aerial hyphae and their function in sclerotia and fruiting bodies remains to be investigated. In Botryotinia fuckeliana (strain B05.10) (Noble rot fungus), this protein is Hydrophobin-like protein 1.